We begin with the raw amino-acid sequence, 330 residues long: MKQTIFSGIQPSGSVTLGNYIGAMKQFVELQHDYNSYFCIVDQHAITVPQDRLELRKNIRNLAALYLAVGLDPEKATLFIQSEVPAHAQAGWMMQCVAYIGELERMTQFKDKSKGNEAVVSGLLTYPPLMAADILLYGTDLVPVGEDQKQHLELTRNLAERFNKKYNDIFTIPEVKIPKVGARIMSLNDPLKKMSKSDPNQKAYITLLDEPKQLEKKIKSAVTDSEGIVKFDKENKPGVSNLLTIYSILGNTTIEELEAKYEGKGYGEFKGDLAEVVVNALKPIQDRYYELIESEELDRILDEGAERANRTANKMLKKMENAMGLGRKRR.

ATP is bound by residues 10-12 (QPS) and 18-19 (GN). A 'HIGH' region motif is present at residues 11 to 19 (PSGSVTLGN). D133 contributes to the L-tryptophan binding site. Residues 145–147 (GED), I184, and 193–197 (KMSKS) contribute to the ATP site. A 'KMSKS' region motif is present at residues 193–197 (KMSKS).

It belongs to the class-I aminoacyl-tRNA synthetase family. As to quaternary structure, homodimer.

The protein resides in the cytoplasm. The catalysed reaction is tRNA(Trp) + L-tryptophan + ATP = L-tryptophyl-tRNA(Trp) + AMP + diphosphate + H(+). In terms of biological role, catalyzes the attachment of tryptophan to tRNA(Trp). The sequence is that of Tryptophan--tRNA ligase from Bacillus subtilis (strain 168).